The following is a 763-amino-acid chain: uncharacterized protein (763 aa).

In terms of domain architecture, TR mART core spans 380–607 (DSVLNPFNTN…YNIKVITMRL (228 aa)). The helical transmembrane segment at 684-700 (SYVSIYALLCPLLTNIY) threads the bilayer.

The protein resides in the membrane. This is an uncharacterized protein from Acanthamoeba polyphaga mimivirus (APMV).